We begin with the raw amino-acid sequence, 70 residues long: Conotoxin Cl9.1 (70 aa).

The first 20 residues, 1–20, serve as a signal peptide directing secretion; that stretch reads MMGKLGVVLFICLVLFPLET. The propeptide occupies 21-50; that stretch reads LQLEGGQQADRHVDQLEGNPNRETRTIEVR. Intrachain disulfides connect C51/C63, C56/C67, and C61/C70.

It belongs to the conotoxin M superfamily. In terms of tissue distribution, expressed by the venom duct.

The protein resides in the secreted. The chain is Conotoxin Cl9.1 from Californiconus californicus (California cone).